The chain runs to 214 residues: uncharacterized protein (214 aa).

5 helical membrane-spanning segments follow: residues 18-38 (LLLL…NTFV), 51-71 (DLAL…IVAG), 80-100 (ILVL…VLLV), 108-128 (LLVL…AFNV), and 145-165 (FFGV…GYII).

The protein localises to the cell membrane. This is an uncharacterized protein from Geobacillus stearothermophilus (Bacillus stearothermophilus).